The sequence spans 105 residues: Putative regulatory protein COPRO5265_1186 (105 aa).

The segment at 76–105 (RLEEEEEEEERTEPITEQEAELEEESGEDV) is disordered. Residues 78–105 (EEEEEEEERTEPITEQEAELEEESGEDV) show a composition bias toward acidic residues.

Belongs to the RemA family.

In Coprothermobacter proteolyticus (strain ATCC 35245 / DSM 5265 / OCM 4 / BT), this protein is Putative regulatory protein COPRO5265_1186.